A 107-amino-acid polypeptide reads, in one-letter code: DNA polymerase delta subunit 4 (107 aa).

Residues 1–16 carry the PCNA-interaction protein motif (PIP box) motif; it reads MGRKRFITDSYPVVKK. The segment at 1-40 is disordered; it reads MGRKRFITDSYPVVKKREGPPGHSKGELAPELGEDTQSLS. Positions 15–28 are enriched in basic and acidic residues; that stretch reads KKREGPPGHSKGEL.

This sequence belongs to the DNA polymerase delta subunit 4 family. Component of the tetrameric DNA polymerase delta complex (Pol-delta4), which consists of POLD1/p125, POLD2/p50, POLD3/p66/p68 and POLD4/p12, with POLD1 bearing DNA polymerase and 3' to 5' proofreading exonuclease activities. Within this complex, directly interacts with POLD1 and POLD2. Directly interacts with PCNA, as do POLD1 and POLD3; this interaction stimulates Pol-delta4 polymerase activity. As POLD1 and POLD2, directly interacts with WRNIP1; this interaction stimulates DNA polymerase delta-mediated DNA synthesis, independently of the presence of PCNA, possibly by increasing initiation frequency. Upon genotoxic stress induced by DNA damaging agents or by replication stress, POLD4 is proteolytically degraded and Pol-delta4 is converted into a trimeric form of the complex (Pol-delta3) that has an increased proofreading activity. The DNA polymerase delta complex interacts with POLDIP2; this interaction is probably mediated through direct binding to POLD2. Post-translationally, ubiquitinated; undergoes 'Lys-48'-linked polyubiquitination in response to UV irradiation or treatment with an alkylating agent, leading to proteasomal degradation. This modification is mediated, at least in part, by RNF8. Ubiquitinated; undergoes 'Lys-48'-linked ubiquitination in response to UV irradiation, leading to proteasomal degradation. This modification is partly mediated by RNF8 and by the DCX(DTL) E3 ubiquitin ligase complex (also called CRL4(CDT2)). Efficient degradation requires the presence of PCNA and is required for the inhibition of fork progression after DNA damage.

The protein localises to the nucleus. Its function is as follows. As a component of the tetrameric DNA polymerase delta complex (Pol-delta4), plays a role in high fidelity genome replication and repair. Within this complex, increases the rate of DNA synthesis and decreases fidelity by regulating POLD1 polymerase and proofreading 3' to 5' exonuclease activity. Pol-delta4 participates in Okazaki fragment processing, through both the short flap pathway, as well as a nick translation system. Under conditions of DNA replication stress, required for the repair of broken replication forks through break-induced replication (BIR), a mechanism that may induce segmental genomic duplications of up to 200 kb. Involved in Pol-delta4 translesion synthesis (TLS) of templates carrying O6-methylguanine or abasic sites. Its degradation in response to DNA damage is required for the inhibition of fork progression and cell survival. In Mus musculus (Mouse), this protein is DNA polymerase delta subunit 4 (Pold4).